Consider the following 660-residue polypeptide: UPF0603 protein MT2410 (660 aa).

Positions 1 to 26 (MRLVRLLGMVLTILAAGLLLGPPAGA) are cleaved as a signal peptide. The chain crosses the membrane as a helical span at residues 162–182 (VVLLVTVGIIVIVVAVLLVVM). A coiled-coil region spans residues 488–567 (DQLTKVDADL…LEAAHDRKSS (80 aa)). Residues 605–625 (GGNNAGAILGGIIIGDLLSGG) traverse the membrane as a helical segment. The interval 638-660 (FGGSSNAPGSSPDGGFLGGGGRF) is disordered.

Belongs to the UPF0603 family.

The protein localises to the cell membrane. Its function is as follows. May play a role in septum formation. This chain is UPF0603 protein MT2410, found in Mycobacterium tuberculosis (strain CDC 1551 / Oshkosh).